The chain runs to 454 residues: Serine--tRNA ligase (454 aa).

247 to 249 (TAE) contacts L-serine. ATP is bound by residues 278–280 (RKE) and Val294. Glu301 contacts L-serine. 365–368 (ELAS) provides a ligand contact to ATP. Thr400 contacts L-serine.

Belongs to the class-II aminoacyl-tRNA synthetase family. Type-1 seryl-tRNA synthetase subfamily. As to quaternary structure, homodimer. The tRNA molecule binds across the dimer.

It localises to the cytoplasm. It catalyses the reaction tRNA(Ser) + L-serine + ATP = L-seryl-tRNA(Ser) + AMP + diphosphate + H(+). The enzyme catalyses tRNA(Sec) + L-serine + ATP = L-seryl-tRNA(Sec) + AMP + diphosphate + H(+). Its pathway is aminoacyl-tRNA biosynthesis; selenocysteinyl-tRNA(Sec) biosynthesis; L-seryl-tRNA(Sec) from L-serine and tRNA(Sec): step 1/1. Catalyzes the attachment of serine to tRNA(Ser). Is also able to aminoacylate tRNA(Sec) with serine, to form the misacylated tRNA L-seryl-tRNA(Sec), which will be further converted into selenocysteinyl-tRNA(Sec). This is Serine--tRNA ligase from Pyrobaculum calidifontis (strain DSM 21063 / JCM 11548 / VA1).